A 344-amino-acid chain; its full sequence is Dihydroorotase (344 aa).

2 residues coordinate Zn(2+): His-13 and His-15. Residues 15-17 (HLR) and Asn-41 each bind substrate. Residues Lys-98, His-135, and His-173 each coordinate Zn(2+). Position 98 is an N6-carboxylysine (Lys-98). His-135 serves as a coordination point for substrate. Leu-218 provides a ligand contact to substrate. Asp-247 contributes to the Zn(2+) binding site. Residue Asp-247 is part of the active site. Residues His-251 and Ala-263 each coordinate substrate.

The protein belongs to the metallo-dependent hydrolases superfamily. DHOase family. Class II DHOase subfamily. In terms of assembly, homodimer. Requires Zn(2+) as cofactor.

The enzyme catalyses (S)-dihydroorotate + H2O = N-carbamoyl-L-aspartate + H(+). It participates in pyrimidine metabolism; UMP biosynthesis via de novo pathway; (S)-dihydroorotate from bicarbonate: step 3/3. In terms of biological role, catalyzes the reversible cyclization of carbamoyl aspartate to dihydroorotate. The sequence is that of Dihydroorotase from Neisseria meningitidis serogroup C / serotype 2a (strain ATCC 700532 / DSM 15464 / FAM18).